A 374-amino-acid polypeptide reads, in one-letter code: Queuine tRNA-ribosyltransferase (374 aa).

Asp-90 acts as the Proton acceptor in catalysis. Residues 90-94 (DSGGF), Asp-144, Gln-193, and Gly-220 each bind substrate. The segment at 251 to 257 (GVGTPED) is RNA binding. The active-site Nucleophile is the Asp-270. The RNA binding; important for wobble base 34 recognition stretch occupies residues 275–279 (TRNAR). Positions 308, 310, 313, and 339 each coordinate Zn(2+).

This sequence belongs to the queuine tRNA-ribosyltransferase family. Homodimer. Within each dimer, one monomer is responsible for RNA recognition and catalysis, while the other monomer binds to the replacement base PreQ1. Zn(2+) serves as cofactor.

The enzyme catalyses 7-aminomethyl-7-carbaguanine + guanosine(34) in tRNA = 7-aminomethyl-7-carbaguanosine(34) in tRNA + guanine. The protein operates within tRNA modification; tRNA-queuosine biosynthesis. Its function is as follows. Catalyzes the base-exchange of a guanine (G) residue with the queuine precursor 7-aminomethyl-7-deazaguanine (PreQ1) at position 34 (anticodon wobble position) in tRNAs with GU(N) anticodons (tRNA-Asp, -Asn, -His and -Tyr). Catalysis occurs through a double-displacement mechanism. The nucleophile active site attacks the C1' of nucleotide 34 to detach the guanine base from the RNA, forming a covalent enzyme-RNA intermediate. The proton acceptor active site deprotonates the incoming PreQ1, allowing a nucleophilic attack on the C1' of the ribose to form the product. After dissociation, two additional enzymatic reactions on the tRNA convert PreQ1 to queuine (Q), resulting in the hypermodified nucleoside queuosine (7-(((4,5-cis-dihydroxy-2-cyclopenten-1-yl)amino)methyl)-7-deazaguanosine). This Campylobacter fetus subsp. fetus (strain 82-40) protein is Queuine tRNA-ribosyltransferase.